The following is a 191-amino-acid chain: Leucyl/phenylalanyl-tRNA--protein transferase (191 aa).

This sequence belongs to the L/F-transferase family.

Its subcellular location is the cytoplasm. It carries out the reaction N-terminal L-lysyl-[protein] + L-leucyl-tRNA(Leu) = N-terminal L-leucyl-L-lysyl-[protein] + tRNA(Leu) + H(+). It catalyses the reaction N-terminal L-arginyl-[protein] + L-leucyl-tRNA(Leu) = N-terminal L-leucyl-L-arginyl-[protein] + tRNA(Leu) + H(+). The enzyme catalyses L-phenylalanyl-tRNA(Phe) + an N-terminal L-alpha-aminoacyl-[protein] = an N-terminal L-phenylalanyl-L-alpha-aminoacyl-[protein] + tRNA(Phe). Functionally, functions in the N-end rule pathway of protein degradation where it conjugates Leu, Phe and, less efficiently, Met from aminoacyl-tRNAs to the N-termini of proteins containing an N-terminal arginine or lysine. This is Leucyl/phenylalanyl-tRNA--protein transferase from Gloeothece citriformis (strain PCC 7424) (Cyanothece sp. (strain PCC 7424)).